The following is a 235-amino-acid chain: CD-NTase-associated protein 13 (235 aa).

2 helical membrane-spanning segments follow: residues 14–34 and 45–65; these read IVHHVSTSLNIISFIIVLIWI and IIFTVNLEAIVVFISILIVGL.

This sequence in the C-terminal section; belongs to the bacterial STING family. In terms of assembly, homodimer.

The protein resides in the cell inner membrane. Its function is as follows. Effector protein of a CBASS antivirus system. CBASS (cyclic oligonucleotide-based antiphage signaling system) provides immunity against bacteriophage. The CD-NTase protein synthesizes cyclic nucleotides in response to infection; these serve as specific second messenger signals. The signals activate a diverse range of effectors, leading to bacterial cell death and thus abortive phage infection. A type I-D(GG) CBASS system. Functionally, binds cyclic dinucleotides: binds c-di-GMP (synthesized by the cognate CdnE encoded upstream in the same operon), cyclic 3'3'-cyclic GMP-AMP (3'3'-cGAMP) but not cUMP-AMP. The effector protein for this CBASS system, its activity is stimulated by c-di-GMP and leads to cell death. This is CD-NTase-associated protein 13 from Flavobacteriaceae sp. genome_bin_11.